Here is a 318-residue protein sequence, read N- to C-terminus: Ribosomal protein L11 methyltransferase (318 aa).

Residues threonine 161, glycine 182, aspartate 204, and asparagine 247 each coordinate S-adenosyl-L-methionine.

Belongs to the methyltransferase superfamily. PrmA family.

It is found in the cytoplasm. The catalysed reaction is L-lysyl-[protein] + 3 S-adenosyl-L-methionine = N(6),N(6),N(6)-trimethyl-L-lysyl-[protein] + 3 S-adenosyl-L-homocysteine + 3 H(+). Its function is as follows. Methylates ribosomal protein L11. In Moorella thermoacetica (strain ATCC 39073 / JCM 9320), this protein is Ribosomal protein L11 methyltransferase.